We begin with the raw amino-acid sequence, 147 residues long: Deoxyuridine 5'-triphosphate nucleotidohydrolase (147 aa).

Residues 67–69 (RSG), Asn80, and 84–86 (TID) contribute to the substrate site.

This sequence belongs to the dUTPase family. The cofactor is Mg(2+).

It catalyses the reaction dUTP + H2O = dUMP + diphosphate + H(+). Its pathway is pyrimidine metabolism; dUMP biosynthesis; dUMP from dCTP (dUTP route): step 2/2. Its function is as follows. This enzyme is involved in nucleotide metabolism: it produces dUMP, the immediate precursor of thymidine nucleotides and it decreases the intracellular concentration of dUTP so that uracil cannot be incorporated into DNA. The protein is Deoxyuridine 5'-triphosphate nucleotidohydrolase of Anaplasma marginale (strain St. Maries).